Here is an 89-residue protein sequence, read N- to C-terminus: Cell division protein FtsL (89 aa).

At 1–6 (MAMNKL) the chain is on the cytoplasmic side. The helical transmembrane segment at 7–24 (NFLLLLAVCVSAFSVVMQ) threads the bilayer. Residues 25–89 (QNQYRLNFTA…GNTFMVEHQR (65 aa)) lie on the Periplasmic side of the membrane. Residues 33-73 (TALDKAKKQEIALEQDYAQMRLQQARLANHEAIRAAAEKQN) adopt a coiled-coil conformation.

The protein belongs to the FtsL family. In terms of assembly, part of a complex composed of FtsB, FtsL and FtsQ.

The protein resides in the cell inner membrane. Essential cell division protein. May link together the upstream cell division proteins, which are predominantly cytoplasmic, with the downstream cell division proteins, which are predominantly periplasmic. This chain is Cell division protein FtsL, found in Neisseria meningitidis serogroup B (strain ATCC BAA-335 / MC58).